The following is a 622-amino-acid chain: Mitochondrial Rho GTPase 2 (622 aa).

Over 1-596 the chain is Cytoplasmic; sequence MRRDVRILLL…ELHPTPFWLR (596 aa). A Miro 1 domain is found at 2 to 168; that stretch reads RRDVRILLLG…FYYAQKAVLH (167 aa). The GTP site is built by G16, K17, T18, and S19. Residue T18 participates in Mg(2+) binding. Position 57 (D57) interacts with Mg(2+). Residue S59 coordinates GTP. K96 is covalently cross-linked (Glycyl lysine isopeptide (Lys-Gly) (interchain with G-Cter in ubiquitin)). GTP-binding residues include N118, K119, D121, A149, and K150. Residue K119 forms a Glycyl lysine isopeptide (Lys-Gly) (interchain with G-Cter in ubiquitin) linkage. Residue K164 forms a Glycyl lysine isopeptide (Lys-Gly) (interchain with G-Cter in ubiquitin) linkage. EF-hand domains follow at residues 184–219 and 304–339; these read ACAQALTRIFRLSDQDLDHALSDKELNAFQKSCFGH and RGYQFVQRVFEKHDQDHDGVLSPTELESLFSVFSVA. 8 residues coordinate Ca(2+): D197, D199, D201, E208, D317, D319, D321, and E328. Residues 415-580 enclose the Miro 2 domain; sequence RSVLMCKVLG…FTQLATMATF (166 aa). GTP is bound by residues G427, G429, K430, S431, and A432. S431 serves as a coordination point for Mg(2+). E475 serves as a coordination point for Mg(2+). K529, D531, and C560 together coordinate GTP. The helical; Anchor for type IV membrane protein transmembrane segment at 597-619 threads the bilayer; the sequence is GVLVAVGTAVAAVLSFSLYRVLV. Over 620–622 the chain is Mitochondrial intermembrane; it reads KSR.

The protein belongs to the mitochondrial Rho GTPase family. In terms of assembly, homodimer. Interacts with the kinesin-binding proteins TRAK1/OIP106 and TRAK2/GRIF1, forming a link between mitochondria and the trafficking apparatus of the microtubules. Interacts with ARMCX3. Found in a complex with KIF5B, OGT, RHOT1 and TRAK1. Post-translationally, ubiquitinated by PRKN in a PINK1-dependent manner, leading to its degradation.

It is found in the mitochondrion outer membrane. It catalyses the reaction GTP + H2O = GDP + phosphate + H(+). The catalysed reaction is ATP + H2O = ADP + phosphate + H(+). The enzyme catalyses UTP + H2O = UDP + phosphate + H(+). Functionally, atypical mitochondrial nucleoside-triphosphatase (NTPase) involved in mitochondrial trafficking. Probably involved in control of anterograde transport of mitochondria and their subcellular distribution. Can hydrolyze GTP, ATP and UTP. The chain is Mitochondrial Rho GTPase 2 (Rhot2) from Rattus norvegicus (Rat).